Here is a 272-residue protein sequence, read N- to C-terminus: Large ribosomal subunit protein uL2 (272 aa).

The disordered stretch occupies residues 222 to 272; it reads GTAMNPVDHPHGGGEGRNFGKHPVSPWGKKTKGKKTRNNRLTDKFIVHRRS. Basic residues predominate over residues 250–259; the sequence is KKTKGKKTRN. A compositionally biased stretch (basic and acidic residues) spans 261 to 272; the sequence is RLTDKFIVHRRS.

This sequence belongs to the universal ribosomal protein uL2 family. Part of the 50S ribosomal subunit. Forms a bridge to the 30S subunit in the 70S ribosome.

One of the primary rRNA binding proteins. Required for association of the 30S and 50S subunits to form the 70S ribosome, for tRNA binding and peptide bond formation. It has been suggested to have peptidyltransferase activity; this is somewhat controversial. Makes several contacts with the 16S rRNA in the 70S ribosome. The chain is Large ribosomal subunit protein uL2 from Baumannia cicadellinicola subsp. Homalodisca coagulata.